A 698-amino-acid polypeptide reads, in one-letter code: Sialic acid-binding Ig-like lectin 11 (698 aa).

An N-terminal signal peptide occupies residues 1–27 (MVPGQAQPQSPEMLLLPLLLPVLGAGS). Over 28-561 (LNKDPSYSLQ…KLEHGGGLGL (534 aa)) the chain is Extracellular. In terms of domain architecture, Ig-like V-type spans 31 to 134 (DPSYSLQVQR…DEAWYFFRVE (104 aa)). 3 disulfide bridges follow: Cys49-Cys186, Cys54-Cys114, and Cys177-Cys228. N-linked (GlcNAc...) asparagine glycans are attached at residues Asn55 and Asn90. Arg132 serves as a coordination point for N-acetylneuraminate. Ig-like C2-type domains are found at residues 159 to 244 (PDVY…RTVR), 251 to 350 (PKDL…LDLS), and 355 to 452 (PENL…LSLS). A glycan (N-linked (GlcNAc...) asparagine) is linked at Asn262. A disulfide bridge connects residues Cys287 and Cys334. 2 N-linked (GlcNAc...) asparagine glycosylation sites follow: Asn366 and Asn375. Cys391 and Cys436 form a disulfide bridge. N-linked (GlcNAc...) asparagine glycosylation is found at Asn497 and Asn515. A helical transmembrane segment spans residues 562–584 (GAALGAGVAALLAFCSCLVVFRV). Topologically, residues 585-698 (KICRKEARKR…EREMSGMVPK (114 aa)) are cytoplasmic. The interval 596–635 (AAEQDVPSTLGPISQGHQHECSAGSSQDHPPPGAATYTPG) is disordered. An ITIM motif motif is present at residues 642–647 (LHYASL). Tyr668 is subject to Phosphotyrosine. A disordered region spans residues 675–698 (TGQPLRGPGFGLQLEREMSGMVPK).

The protein belongs to the immunoglobulin superfamily. SIGLEC (sialic acid binding Ig-like lectin) family. In terms of assembly, interacts with PTPN6/SHP-1 and PTPN11/SHP-2 upon phosphorylation. In terms of processing, phosphorylated on tyrosine residues. In terms of tissue distribution, expressed by macrophages in various tissues including Kupffer cells. Also found in brain microglia.

It is found in the membrane. Functionally, putative adhesion molecule that mediates sialic-acid dependent binding to cells. Preferentially binds to alpha-2,8-linked sialic acid. The sialic acid recognition site may be masked by cis interactions with sialic acids on the same cell surface. In the immune response, may act as an inhibitory receptor upon ligand induced tyrosine phosphorylation by recruiting cytoplasmic phosphatase(s) via their SH2 domain(s) that block signal transduction through dephosphorylation of signaling molecules. This is Sialic acid-binding Ig-like lectin 11 (SIGLEC11) from Homo sapiens (Human).